Here is a 199-residue protein sequence, read N- to C-terminus: Molybdenum cofactor guanylyltransferase (199 aa).

GTP contacts are provided by residues 12–14 (LAG), lysine 25, asparagine 53, aspartate 71, and aspartate 101. Aspartate 101 contacts Mg(2+).

It belongs to the MobA family. As to quaternary structure, monomer. Mg(2+) serves as cofactor.

It is found in the cytoplasm. The enzyme catalyses Mo-molybdopterin + GTP + H(+) = Mo-molybdopterin guanine dinucleotide + diphosphate. Its function is as follows. Transfers a GMP moiety from GTP to Mo-molybdopterin (Mo-MPT) cofactor (Moco or molybdenum cofactor) to form Mo-molybdopterin guanine dinucleotide (Mo-MGD) cofactor. The chain is Molybdenum cofactor guanylyltransferase from Cupriavidus necator (strain ATCC 17699 / DSM 428 / KCTC 22496 / NCIMB 10442 / H16 / Stanier 337) (Ralstonia eutropha).